The following is a 733-amino-acid chain: Phosphoribosylformylglycinamidine synthase subunit PurL (733 aa).

The active site involves His-44. ATP contacts are provided by Tyr-47 and Lys-86. Glu-88 provides a ligand contact to Mg(2+). Substrate is bound by residues 89 to 92 and Arg-111; that span reads SHNH. The Proton acceptor role is filled by His-90. Asp-112 contributes to the Mg(2+) binding site. Substrate is bound at residue Gln-233. Residue Asp-261 participates in Mg(2+) binding. Substrate is bound at residue 305–307; it reads ESQ. ATP contacts are provided by Asp-492 and Gly-529. A Mg(2+)-binding site is contributed by Asn-530. Ser-532 contacts substrate.

Belongs to the FGAMS family. In terms of assembly, monomer. Part of the FGAM synthase complex composed of 1 PurL, 1 PurQ and 2 PurS subunits.

The protein resides in the cytoplasm. The enzyme catalyses N(2)-formyl-N(1)-(5-phospho-beta-D-ribosyl)glycinamide + L-glutamine + ATP + H2O = 2-formamido-N(1)-(5-O-phospho-beta-D-ribosyl)acetamidine + L-glutamate + ADP + phosphate + H(+). The protein operates within purine metabolism; IMP biosynthesis via de novo pathway; 5-amino-1-(5-phospho-D-ribosyl)imidazole from N(2)-formyl-N(1)-(5-phospho-D-ribosyl)glycinamide: step 1/2. Part of the phosphoribosylformylglycinamidine synthase complex involved in the purines biosynthetic pathway. Catalyzes the ATP-dependent conversion of formylglycinamide ribonucleotide (FGAR) and glutamine to yield formylglycinamidine ribonucleotide (FGAM) and glutamate. The FGAM synthase complex is composed of three subunits. PurQ produces an ammonia molecule by converting glutamine to glutamate. PurL transfers the ammonia molecule to FGAR to form FGAM in an ATP-dependent manner. PurS interacts with PurQ and PurL and is thought to assist in the transfer of the ammonia molecule from PurQ to PurL. The sequence is that of Phosphoribosylformylglycinamidine synthase subunit PurL from Thermomicrobium roseum (strain ATCC 27502 / DSM 5159 / P-2).